The following is a 1894-amino-acid chain: Plexin-A1 (1894 aa).

An N-terminal signal peptide occupies residues M1–S27. Residues S28–V510 enclose the Sema domain. The Extracellular portion of the chain corresponds to S28–P1242. N75 carries N-linked (GlcNAc...) asparagine glycosylation. Disulfide bonds link C93–C102, C128–C136, C284–C405, C300–C356, C374–C393, C513–C530, C519–C561, C522–C539, C533–C545, and C596–C615. 3 N-linked (GlcNAc...) asparagine glycosylation sites follow: N658, N670, and N699. IPT/TIG domains are found at residues P862–V957, P959–T1043, P1046–Y1145, and P1148–Y1234. N-linked (GlcNAc...) asparagine glycosylation occurs at N1041. N1185 and N1210 each carry an N-linked (GlcNAc...) asparagine glycan. Residues A1243–I1263 form a helical membrane-spanning segment. Positions L1262–A1315 form a coiled coil. The Cytoplasmic portion of the chain corresponds to A1264–S1894.

The protein belongs to the plexin family. As to quaternary structure, interacts directly with NRP1 and NRP2. Interacts with PLXN1B. Interacts with FARP2, RND1 and KDR/VEGFR2. Binding of SEMA3A leads to dissociation of FARP2. Interacts with CRMP1, DPYSL2/CRMP2, DPYSL3/CRMP3 and DPYSL4/CRMP4. Interacts (via TIG domains) with TREM2; the interaction mediates SEMA6D binding and signaling through TYROBP. Ubiquitous.

It localises to the cell membrane. Its function is as follows. Coreceptor for SEMA3A, SEMA3C, SEMA3F and SEMA6D. Necessary for signaling by class 3 semaphorins and subsequent remodeling of the cytoskeleton. Plays a role in axon guidance, invasive growth and cell migration. Class 3 semaphorins bind to a complex composed of a neuropilin and a plexin. The plexin modulates the affinity of the complex for specific semaphorins, and its cytoplasmic domain is required for the activation of down-stream signaling events in the cytoplasm. Acts as coreceptor of TREM2 for SEMA6D in dendritic cells and is involved in the generation of immune responses and skeletal homeostasis. The sequence is that of Plexin-A1 (Plxna1) from Mus musculus (Mouse).